Consider the following 239-residue polypeptide: MCKYELAAKAHKNVYGVEIEVEEIKKQVEEIRKEHNNWIDESAAFVKWLETLELKDEFKKLREEERMNKNGNSIEVKASNNAMVVLEKTAEKVDSLDDVIEKMDSLDEDLMLLDEANEHLPLAYTYPDKKTGKEKIILSWAGIVKAMRMQGNIEVEPPTFQEVNGKIIATCRVRDLKRNIVMVGTAERVSPGRMGEEFKYTVLASKAIRNALKHIIEPKYLQMVIAEAKKRKSYVIITY.

This is an uncharacterized protein from Methanocaldococcus jannaschii (strain ATCC 43067 / DSM 2661 / JAL-1 / JCM 10045 / NBRC 100440) (Methanococcus jannaschii).